We begin with the raw amino-acid sequence, 329 residues long: Glucokinase (329 aa).

13–18 (GDIGGT) provides a ligand contact to ATP.

The protein belongs to the bacterial glucokinase family.

It is found in the cytoplasm. The catalysed reaction is D-glucose + ATP = D-glucose 6-phosphate + ADP + H(+). The protein is Glucokinase of Caulobacter sp. (strain K31).